Here is a 397-residue protein sequence, read N- to C-terminus: MGEEDWSDTQQQPRKRWTLEQLKGGNTFLSQQAGTNKFETQKGMTAVGMPRWNITKDKKQGYIAPDQRSENVLRVQCGTNQYASQKGETPIGASRFQVPKVTYKKEWETILDKEGEKIIPKQAGDYGLASQAGEVSMGGHRNQVALIRGRLPHDRRTHGVLCFQNGTNLFASQTGMSAPPGLGAVRQATQKIEGLELGEDILRRGTEFTPWYSGQNKFATQAGSGGFLKVRDVLPHTVGGKDIEEELKQKSEGIVPLQSGTNKLASQRGMTGFGTPRNTQLRAGWKKEWIEDYEAALKEWEETKPPGSASSVDPFGHYKKKFEERESSRQSEIDSQSVKASEPVEPEPEEEEEEEEEEKIEEPAAKEEEEEEEEEEEEEEEELEEEEEEEEEEEEDE.

Calponin-like repeat units lie at residues 29-54 (LSQQAGTNKFETQKGMTAVGMPRWNI), 73-98 (LRVQCGTNQYASQKGETPIGASRFQV), 119-144 (IPKQAGDYGLASQAGEVSMGGHRNQV), 161-189 (LCFQNGTNLFASQTGMSAPPGLGAVRQAT), 209-234 (TPWYSGQNKFATQAGSGGFLKVRDVL), and 255-280 (VPLQSGTNKLASQRGMTGFGTPRNTQ). The interval 301-397 (EETKPPGSAS…EEEEEEEEDE (97 aa)) is disordered. The span at 321 to 332 (KFEERESSRQSE) shows a compositional bias: basic and acidic residues. Acidic residues-rich tracts occupy residues 344-360 (VEPEPEEEEEEEEEEKI) and 367-397 (EEEEEEEEEEEEEEEELEEEEEEEEEEEEDE).

The protein belongs to the calponin family. In terms of tissue distribution, expressed in pharyngeal muscle cells (at protein level).

Functionally, required for pharyngeal pumping. The sequence is that of Calponin-like protein clik-2 from Caenorhabditis elegans.